Reading from the N-terminus, the 298-residue chain is Protease HtpX homolog (298 aa).

Helical transmembrane passes span 15-35 (LIMV…GYLF) and 39-59 (PWMG…IMWQ). H143 serves as a coordination point for Zn(2+). E144 is a catalytic residue. H147 contributes to the Zn(2+) binding site. The next 2 membrane-spanning stretches (helical) occupy residues 153–173 (ILLS…SGMA) and 197–217 (MIFK…SASL). E227 is a binding site for Zn(2+).

This sequence belongs to the peptidase M48B family. Requires Zn(2+) as cofactor.

The protein resides in the cell membrane. In Lactobacillus helveticus (strain DPC 4571), this protein is Protease HtpX homolog.